We begin with the raw amino-acid sequence, 312 residues long: Ankyrin repeat family A protein 2 (312 aa).

ANK repeat units follow at residues 147–179 (ANSL…HTDE), 180–212 (EGFT…LLGK), 213–245 (GRES…EYDW), 246–278 (NGGT…IETD), and 279–312 (SGYN…NIRE).

Interacts (via ANK repeats) with CCDC8 (via PxLPxI/L motif); mediates the interaction with the 3M complex which is composed of CCDC8, CUL7 and OBSL1. Interacts (via ANK repeats) with HDAC4 (via PxLPxI/L motif). Interacts (via ANK repeats) with HDAC5 (via PxLPxI/L motif). Interacts (via ANK repeats) with LRP2/megalin (via PxLPxI/L motif). Interacts (via ANK repeats) with RFX7 (via PxLPxI/L motif). Interacts with AHRR. Interacts with NEK6.

The protein resides in the cytoplasm. It is found in the cytoskeleton. Its subcellular location is the membrane. Its function is as follows. May regulate the interaction between the 3M complex and the histone deacetylases HDAC4 and HDAC5. May also regulate LRP2/megalin. The sequence is that of Ankyrin repeat family A protein 2 (Ankra2) from Mus musculus (Mouse).